The chain runs to 903 residues: DNA mismatch repair protein MutS (903 aa).

655 to 662 (GPNMAGKS) contacts ATP.

This sequence belongs to the DNA mismatch repair MutS family.

This protein is involved in the repair of mismatches in DNA. It is possible that it carries out the mismatch recognition step. This protein has a weak ATPase activity. The polypeptide is DNA mismatch repair protein MutS (Caulobacter vibrioides (strain ATCC 19089 / CIP 103742 / CB 15) (Caulobacter crescentus)).